The following is a 605-amino-acid chain: MSKIIGIDLGTTNSCVAVLEGGEPKVIPNPEGNRTTPSVVAFKNGERQVGEVAKRQAITNPNTIISVKRHMGTDHKVEAEGKQYTPQEMSAIILQHLKGYAEEYLGEPVTKAVITVPAYFNDAERQATKDAGKIAGLEVERIINEPTAAALAYGLEKTDEDQTVLVYDLGGGTFDVSILELGDGVFEVRATAGDNRLGGDDFDQVIIDYLVAEFKKENGVDLSKDKMALQRLKDAAEKAKKDLSGVTSTQISLPFITAGEAGPLHLEVSLSRAKFDELSAGLVERTMAPVRQALKDAGLSASELDKVILVGGSTRIPAVQDAIKKETGQDPHKGVNPDEVVALGAAIQGGVLTGDVKDVVLLDVTPLSLGIETMGGVFTKLIERNTTIPTSKSQVFSTAADSQTAVDIHVLQGERPMSADNKTLGRFQLTDIPPAPRGVPQIEVSFDIDKNGIVNVRAKDLGTNKEQAITIKSSTGLSDDEIDRMVKEAEENADADKQRKEEVELRNEADQLVFTTEKTLKDLEGKVEEAEVTKANEAKDALKAAIEKNDLEEIKAKKDELQEIVQALTVKLYEQAQQAQQAGEQGAQNDDVVDAEFEEVNDDKK.

Threonine 173 carries the phosphothreonine; by autocatalysis modification. Over residues 578–588 (QAQQAGEQGAQ) the composition is skewed to low complexity. The segment at 578–605 (QAQQAGEQGAQNDDVVDAEFEEVNDDKK) is disordered. Positions 591-605 (DVVDAEFEEVNDDKK) are enriched in acidic residues.

This sequence belongs to the heat shock protein 70 family.

Acts as a chaperone. This chain is Chaperone protein DnaK (dnaK), found in Priestia megaterium (Bacillus megaterium).